Consider the following 700-residue polypeptide: Elongation factor G (700 aa).

The 276-residue stretch at 10–285 (DRTRNIGIMA…AVIDYLPSPL (276 aa)) folds into the tr-type G domain. Residues 19–26 (AHIDAGKT), 83–87 (DTPGH), and 137–140 (NKMD) contribute to the GTP site.

The protein belongs to the TRAFAC class translation factor GTPase superfamily. Classic translation factor GTPase family. EF-G/EF-2 subfamily.

The protein localises to the cytoplasm. Catalyzes the GTP-dependent ribosomal translocation step during translation elongation. During this step, the ribosome changes from the pre-translocational (PRE) to the post-translocational (POST) state as the newly formed A-site-bound peptidyl-tRNA and P-site-bound deacylated tRNA move to the P and E sites, respectively. Catalyzes the coordinated movement of the two tRNA molecules, the mRNA and conformational changes in the ribosome. This Lacticaseibacillus paracasei (strain ATCC 334 / BCRC 17002 / CCUG 31169 / CIP 107868 / KCTC 3260 / NRRL B-441) (Lactobacillus paracasei) protein is Elongation factor G.